Consider the following 432-residue polypeptide: MTTEIMQISLSHNPADARWGEKALISTNDQGVTIHLTSHDQLGGIQRAARKIDGQGIKQVKLAGEGWGLEQSWAFWQGFRGPKGQRSVVWAELPANEKTELEQRLKIIDWVRDTINAPAEDLGPEQLAKNAIDLLCAVSCDAVSYRITKGEDLREQNYAGIYTVGRGSDRAPVLLALDYNPTGNPDAPVMACLVGKGITFDSGGYSLKQSAFMDSMKSDMGGAATLTGALALAAARGLKERVKLYLCCADNMVSGNAFKLGDIIRYRNGKTVEIMNTDAEGRLVLADGLIDASEQNAPLIIDAATLTGAAKTALGNDYHALFSFDDELAQALLNSAHSEHELFWRLPLAEFHRSQLPSNFAELNNVAGGAYSAGASTAAAFLSHFVKNYQQGWLHIDCSATYRKSAVDQWSAGATGLGVRTVANLLLAQAKQ.

Positions 196 and 201 each coordinate Mn(2+). Lys208 is a catalytic residue. Residues Asp219, Asp278, and Glu280 each coordinate Mn(2+). Arg282 is a catalytic residue.

The protein belongs to the peptidase M17 family. As to quaternary structure, homohexamer. It depends on Mn(2+) as a cofactor.

Its subcellular location is the cytoplasm. The catalysed reaction is Release of an N-terminal amino acid, Xaa, from a peptide or arylamide. Xaa is preferably Glu or Asp but may be other amino acids, including Leu, Met, His, Cys and Gln.. Functionally, probably plays an important role in intracellular peptide degradation. The sequence is that of Peptidase B from Yersinia pestis bv. Antiqua (strain Antiqua).